The primary structure comprises 376 residues: Protein STRICTOSIDINE SYNTHASE-LIKE 8 (376 aa).

The N-terminal stretch at 1-31 (MPISRRVLTPITAAPVILAVLCFFFWSSIIG) is a signal peptide. Residues N98, N172, and N224 are each glycosylated (N-linked (GlcNAc...) asparagine).

This sequence belongs to the strictosidine synthase family.

Its subcellular location is the vacuole. This chain is Protein STRICTOSIDINE SYNTHASE-LIKE 8, found in Arabidopsis thaliana (Mouse-ear cress).